A 240-amino-acid polypeptide reads, in one-letter code: Demethylmenaquinone methyltransferase (240 aa).

S-adenosyl-L-methionine is bound by residues threonine 62, aspartate 80, 102 to 103 (DA), and serine 119.

Belongs to the class I-like SAM-binding methyltransferase superfamily. MenG/UbiE family.

It catalyses the reaction a 2-demethylmenaquinol + S-adenosyl-L-methionine = a menaquinol + S-adenosyl-L-homocysteine + H(+). Its pathway is quinol/quinone metabolism; menaquinone biosynthesis; menaquinol from 1,4-dihydroxy-2-naphthoate: step 2/2. Methyltransferase required for the conversion of demethylmenaquinol (DMKH2) to menaquinol (MKH2). The sequence is that of Demethylmenaquinone methyltransferase from Beutenbergia cavernae (strain ATCC BAA-8 / DSM 12333 / CCUG 43141 / JCM 11478 / NBRC 16432 / NCIMB 13614 / HKI 0122).